Consider the following 130-residue polypeptide: S-adenosylmethionine decarboxylase proenzyme (130 aa).

S63 acts as the Schiff-base intermediate with substrate; via pyruvic acid in catalysis. S63 is modified (pyruvic acid (Ser); by autocatalysis). Residue H68 is the Proton acceptor; for processing activity of the active site. Residue C83 is the Proton donor; for catalytic activity of the active site.

The protein belongs to the prokaryotic AdoMetDC family. Type 1 subfamily. Heterotetramer of two alpha and two beta chains arranged as a dimer of alpha/beta heterodimers. Pyruvate serves as cofactor. Is synthesized initially as an inactive proenzyme. Formation of the active enzyme involves a self-maturation process in which the active site pyruvoyl group is generated from an internal serine residue via an autocatalytic post-translational modification. Two non-identical subunits are generated from the proenzyme in this reaction, and the pyruvate is formed at the N-terminus of the alpha chain, which is derived from the carboxyl end of the proenzyme. The post-translation cleavage follows an unusual pathway, termed non-hydrolytic serinolysis, in which the side chain hydroxyl group of the serine supplies its oxygen atom to form the C-terminus of the beta chain, while the remainder of the serine residue undergoes an oxidative deamination to produce ammonia and the pyruvoyl group blocking the N-terminus of the alpha chain.

The catalysed reaction is S-adenosyl-L-methionine + H(+) = S-adenosyl 3-(methylsulfanyl)propylamine + CO2. The protein operates within amine and polyamine biosynthesis; S-adenosylmethioninamine biosynthesis; S-adenosylmethioninamine from S-adenosyl-L-methionine: step 1/1. In terms of biological role, catalyzes the decarboxylation of S-adenosylmethionine to S-adenosylmethioninamine (dcAdoMet), the propylamine donor required for the synthesis of the polyamines spermine and spermidine from the diamine putrescine. The chain is S-adenosylmethionine decarboxylase proenzyme from Thermosipho africanus (strain TCF52B).